The chain runs to 362 residues: Cobalt-precorrin-5B C(1)-methyltransferase (362 aa).

The protein belongs to the CbiD family.

It catalyses the reaction Co-precorrin-5B + S-adenosyl-L-methionine = Co-precorrin-6A + S-adenosyl-L-homocysteine. It participates in cofactor biosynthesis; adenosylcobalamin biosynthesis; cob(II)yrinate a,c-diamide from sirohydrochlorin (anaerobic route): step 6/10. Its function is as follows. Catalyzes the methylation of C-1 in cobalt-precorrin-5B to form cobalt-precorrin-6A. This chain is Cobalt-precorrin-5B C(1)-methyltransferase, found in Burkholderia vietnamiensis (strain G4 / LMG 22486) (Burkholderia cepacia (strain R1808)).